Here is a 167-residue protein sequence, read N- to C-terminus: NADH-ubiquinone oxidoreductase chain 6 (167 aa).

4 helical membrane passes run 24-44 (PYFGALGLIVVSLVGCLIILA), 54-74 (LLLIYLGGMMVVFSYCTALVL), 85-105 (VLMKMALGVLVVVFLGYGGYL), and 135-155 (WLLIVFGCLGLFLALLVILEI).

The protein belongs to the complex I subunit 6 family.

The protein localises to the mitochondrion membrane. The catalysed reaction is a ubiquinone + NADH + 5 H(+)(in) = a ubiquinol + NAD(+) + 4 H(+)(out). Core subunit of the mitochondrial membrane respiratory chain NADH dehydrogenase (Complex I) that is believed to belong to the minimal assembly required for catalysis. Complex I functions in the transfer of electrons from NADH to the respiratory chain. The immediate electron acceptor for the enzyme is believed to be ubiquinone. This Myxine glutinosa (Atlantic hagfish) protein is NADH-ubiquinone oxidoreductase chain 6 (MT-ND6).